The sequence spans 356 residues: D-alanine--D-alanine ligase (356 aa).

One can recognise an ATP-grasp domain in the interval 134–339 (KQLFEHRGLP…YPELITKLIE (206 aa)). An ATP-binding site is contributed by 167–222 (NDKLNYPVFVKPANLGSSVGISKCNNEAELKEGIKEAFQFDRKLVIEQGVNAREIE). The Mg(2+) site is built by Asp-293, Glu-306, and Asn-308.

The protein belongs to the D-alanine--D-alanine ligase family. The cofactor is Mg(2+). Mn(2+) serves as cofactor.

The protein localises to the cytoplasm. It catalyses the reaction 2 D-alanine + ATP = D-alanyl-D-alanine + ADP + phosphate + H(+). Its pathway is cell wall biogenesis; peptidoglycan biosynthesis. In terms of biological role, cell wall formation. The polypeptide is D-alanine--D-alanine ligase (Staphylococcus aureus (strain Mu3 / ATCC 700698)).